Here is a 164-residue protein sequence, read N- to C-terminus: Large ribosomal subunit protein uL10 (164 aa).

This sequence belongs to the universal ribosomal protein uL10 family. Part of the ribosomal stalk of the 50S ribosomal subunit. The N-terminus interacts with L11 and the large rRNA to form the base of the stalk. The C-terminus forms an elongated spine to which L12 dimers bind in a sequential fashion forming a multimeric L10(L12)X complex.

In terms of biological role, forms part of the ribosomal stalk, playing a central role in the interaction of the ribosome with GTP-bound translation factors. This chain is Large ribosomal subunit protein uL10 (rplJ), found in Helicobacter pylori (strain J99 / ATCC 700824) (Campylobacter pylori J99).